The sequence spans 240 residues: LexA repressor (240 aa).

The segment at residues 26 to 46 is a DNA-binding region (H-T-H motif); sequence FDEMKDALDLASKSGIHRLIT. Residues 78–113 form a disordered region; sequence QPRRGFSPSVIEGSLGKPQPVQPPAPAKPANDENNS. Catalysis depends on for autocatalytic cleavage activity residues S160 and K198.

The protein belongs to the peptidase S24 family. In terms of assembly, homodimer.

It catalyses the reaction Hydrolysis of Ala-|-Gly bond in repressor LexA.. In terms of biological role, represses a number of genes involved in the response to DNA damage (SOS response), including recA and lexA. In the presence of single-stranded DNA, RecA interacts with LexA causing an autocatalytic cleavage which disrupts the DNA-binding part of LexA, leading to derepression of the SOS regulon and eventually DNA repair. The chain is LexA repressor from Rhizobium rhizogenes (strain K84 / ATCC BAA-868) (Agrobacterium radiobacter).